A 148-amino-acid chain; its full sequence is Hemoglobin subunit beta (148 aa).

One can recognise a Globin domain in the interval 3-148; that stretch reads XWTDXERAAI…VVSALGRQYH (146 aa). His-64 and His-93 together coordinate heme b.

The protein belongs to the globin family. Heterotetramer of two alpha chains and two beta chains. As to expression, red blood cells.

Its function is as follows. Involved in oxygen transport from gills to the various peripheral tissues. The sequence is that of Hemoglobin subunit beta (hbb) from Decapterus maruadsi (Japanese scad).